A 189-amino-acid polypeptide reads, in one-letter code: Ribosome hibernation promotion factor (189 aa).

This sequence belongs to the HPF/YfiA ribosome-associated protein family. Long HPF subfamily. As to quaternary structure, interacts with 100S ribosomes. Not associated with 70S ribosome monomers, about 1 monomer per ribosome.

It localises to the cytoplasm. Required for dimerization of active 70S ribosomes into 100S ribosomes in stationary phase; 100S ribosomes are translationally inactive and sometimes present during exponential growth. May not be the only factor implicated. Might negatively regulate the activity of the sigma-54 factor (SigL). The sequence is that of Ribosome hibernation promotion factor (yvyD) from Bacillus subtilis (strain 168).